We begin with the raw amino-acid sequence, 164 residues long: Phosphopantetheine adenylyltransferase (164 aa).

Residue threonine 9 participates in substrate binding. Residues 9–10 (TF) and histidine 17 each bind ATP. Substrate-binding residues include lysine 41, leucine 78, and arginine 92. ATP contacts are provided by residues 93-95 (GLR), glutamate 103, and 128-134 (RQAIASK).

The protein belongs to the bacterial CoaD family. Homohexamer. Mg(2+) serves as cofactor.

The protein resides in the cytoplasm. The catalysed reaction is (R)-4'-phosphopantetheine + ATP + H(+) = 3'-dephospho-CoA + diphosphate. Its pathway is cofactor biosynthesis; coenzyme A biosynthesis; CoA from (R)-pantothenate: step 4/5. Reversibly transfers an adenylyl group from ATP to 4'-phosphopantetheine, yielding dephospho-CoA (dPCoA) and pyrophosphate. This chain is Phosphopantetheine adenylyltransferase, found in Paracoccus denitrificans (strain Pd 1222).